Consider the following 292-residue polypeptide: Phosphatidylglycerol--prolipoprotein diacylglyceryl transferase (292 aa).

6 consecutive transmembrane segments (helical) span residues 25–45 (IALHWYGLGYVVGILFAWWYA), 70–90 (FVVWSAISVVVGGRLGQVLVW), 101–121 (AIIAVWDGGMSFHGGFIGIII), 138–158 (FDIVAAGAPIGIGIVRICNFI), 193–213 (FMEGFLLFIILFIIIFAFKAL), and 255–275 (GFTYGMALSLPMLFFGIYLLL). Residue R153 coordinates a 1,2-diacyl-sn-glycero-3-phospho-(1'-sn-glycerol).

It belongs to the Lgt family.

Its subcellular location is the cell inner membrane. The catalysed reaction is L-cysteinyl-[prolipoprotein] + a 1,2-diacyl-sn-glycero-3-phospho-(1'-sn-glycerol) = an S-1,2-diacyl-sn-glyceryl-L-cysteinyl-[prolipoprotein] + sn-glycerol 1-phosphate + H(+). The protein operates within protein modification; lipoprotein biosynthesis (diacylglyceryl transfer). Functionally, catalyzes the transfer of the diacylglyceryl group from phosphatidylglycerol to the sulfhydryl group of the N-terminal cysteine of a prolipoprotein, the first step in the formation of mature lipoproteins. The sequence is that of Phosphatidylglycerol--prolipoprotein diacylglyceryl transferase from Bartonella quintana (strain Toulouse) (Rochalimaea quintana).